Consider the following 485-residue polypeptide: Ribosomal protein S6 kinase beta-2 (485 aa).

Residues 1-26 (MAAVFDLDLETEEGSEGEGEPEFSPA) form a disordered region. A compositionally biased stretch (acidic residues) spans 7-21 (LDLETEEGSEGEGEP). Phosphoserine is present on Ser15. One can recognise a Protein kinase domain in the interval 67–328 (FELLSVLGKG…AADVQRHPFF (262 aa)). ATP is bound by residues 73-81 (LGKGGYGKV) and Lys99. Asp194 acts as the Proton acceptor in catalysis. The AGC-kinase C-terminal domain occupies 329–399 (RHINWDDLLA…VAPSVLDSIK (71 aa)). Residues 407–485 (KLRSPRRLNS…SKKGRGRSGR (79 aa)) are disordered. Ser417 bears the Phosphoserine mark. Thr420 bears the Phosphothreonine mark. Ser423 carries the phosphoserine modification. Positions 436 to 469 (SPGPPEPMEPSLPPLLPSPPSPPPTSTAPLPIRP) are enriched in pro residues. The Nuclear localization signal motif lies at 474-480 (KKSKKGR). Residues 474-485 (KKSKKGRGRSGR) show a composition bias toward basic residues. At Ser476 the chain carries Phosphoserine; by PKC.

The protein belongs to the protein kinase superfamily. AGC Ser/Thr protein kinase family. S6 kinase subfamily. Post-translationally, phosphorylated and activated by MTOR. Phosphorylation by PKC within the NLS in response to mitogenic stimuli causes cytoplasmic retention.

It is found in the cytoplasm. The protein localises to the nucleus. It catalyses the reaction L-seryl-[protein] + ATP = O-phospho-L-seryl-[protein] + ADP + H(+). The enzyme catalyses L-threonyl-[protein] + ATP = O-phospho-L-threonyl-[protein] + ADP + H(+). Phosphorylates specifically ribosomal protein S6. Seems to act downstream of mTOR signaling in response to growth factors and nutrients to promote cell proliferation, cell growth and cell cycle progression in an alternative pathway regulated by MEAK7. In Mus musculus (Mouse), this protein is Ribosomal protein S6 kinase beta-2 (Rps6kb2).